The primary structure comprises 248 residues: ATP synthase subunit a (248 aa).

The next 6 membrane-spanning stretches (helical) occupy residues 27-47 (FTNS…LMLV), 83-103 (FFPL…IGIV), 113-133 (LIVT…YGFS), 142-162 (LFVP…IEVI), 192-212 (FVAM…LPLG), and 215-235 (IALT…FAIL).

It belongs to the ATPase A chain family. In terms of assembly, F-type ATPases have 2 components, CF(1) - the catalytic core - and CF(0) - the membrane proton channel. CF(1) has five subunits: alpha(3), beta(3), gamma(1), delta(1), epsilon(1). CF(0) has four main subunits: a, b, b' and c.

It localises to the cell inner membrane. Its function is as follows. Key component of the proton channel; it plays a direct role in the translocation of protons across the membrane. This is ATP synthase subunit a from Rhodopseudomonas palustris (strain ATCC BAA-98 / CGA009).